A 358-amino-acid chain; its full sequence is UPF0725 protein At4g29550 (358 aa).

The disordered stretch occupies residues Leu-31–Gln-82. Positions Ser-58 to His-67 are enriched in basic and acidic residues.

This sequence belongs to the UPF0725 (EMB2204) family.

This is UPF0725 protein At4g29550 from Arabidopsis thaliana (Mouse-ear cress).